Here is a 61-residue protein sequence, read N- to C-terminus: MDPKLLDILVCPLCKSPLLYRKPENELICKADRLAFPIRDGIPIMLEDEARRLPVEEEISR.

It belongs to the UPF0434 family.

This chain is UPF0434 protein Nmul_A1027, found in Nitrosospira multiformis (strain ATCC 25196 / NCIMB 11849 / C 71).